The primary structure comprises 385 residues: Protein kup-1 (385 aa).

Disordered regions lie at residues 1-20 (MDDE…VRED) and 326-385 (SLAS…PDEY). 3 stretches are compositionally biased toward basic and acidic residues: residues 8-20 (GSDH…VRED), 339-351 (RTDE…DDIV), and 364-385 (GRVE…PDEY).

This chain is Protein kup-1 (kup-1), found in Caenorhabditis elegans.